Here is a 521-residue protein sequence, read N- to C-terminus: Importin subunit alpha-4 (521 aa).

The tract at residues 1-29 is disordered; the sequence is MAENPGLENHRIKSFKNKGRDVETMRRHR. A2 is subject to N-acetylalanine. Residues 2 to 58 enclose the IBB domain; it reads AENPGLENHRIKSFKNKGRDVETMRRHRNEVTVELRKNKRDEHLLKKRNVPQEESLE. Over residues 18 to 29 the composition is skewed to basic and acidic residues; the sequence is KGRDVETMRRHR. The short motif at 43-52 is the Nuclear localization signal element; that stretch reads EHLLKKRNVP. Phosphoserine occurs at positions 56 and 60. The stretch at 66–106 is one ARM 1; truncated repeat; sequence FKAQNVTLEAILQNATSDNPVVQLSAVQAARKLLSSDRNPP. 8 ARM repeats span residues 107 to 149, 150 to 194, 195 to 233, 234 to 278, 279 to 318, 319 to 360, 361 to 400, and 401 to 443; these read IDDL…TSAQ, TQAV…CRDY, VISL…NKDP, PPPM…EQIQ, MVID…TDEQ, TQVV…NQQQ, VQAV…ISGR, and KDQV…IMAG. The NLS binding site (major) stretch occupies residues 137-229; sequence WALTNIASGT…VTWVIVNLCR (93 aa). The NLS binding site (minor) stretch occupies residues 306–394; sequence RAVGNIVTGT…QKEAAWAISN (89 aa). The ARM 10; atypical repeat unit spans residues 447–485; sequence STIAEIIEECGGLEKIEVLQQHENEDIYKLAFEIIDQYF. Phosphotyrosine is present on Y484.

The protein belongs to the importin alpha family. As to quaternary structure, forms a complex with importin subunit beta-1. Interacts with DDX21. Interacts with NCBP1, NCBP2/CBP20 and NCBP3. Interacts with RCC1. Interacts with ZC3H11A. In terms of tissue distribution, detected more or less in all tissues examined (Ehrlich ascites tumor cells, testis, kidney, spleen, liver, heart, lung, thymus, skeletal muscle, cerebellum and brain (without cerebellum)).

It is found in the cytoplasm. It localises to the nucleus. Functions in nuclear protein import as an adapter protein for nuclear receptor KPNB1. Binds specifically and directly to substrates containing either a simple or bipartite NLS motif. Docking of the importin/substrate complex to the nuclear pore complex (NPC) is mediated by KPNB1 through binding to nucleoporin FxFG repeats and the complex is subsequently translocated through the pore by an energy requiring, Ran-dependent mechanism. At the nucleoplasmic side of the NPC, Ran binds to importin-beta and the three components separate and importin-alpha and -beta are re-exported from the nucleus to the cytoplasm where GTP hydrolysis releases Ran from importin. The directionality of nuclear import is thought to be conferred by an asymmetric distribution of the GTP- and GDP-bound forms of Ran between the cytoplasm and nucleus. In vitro, mediates the nuclear import of human cytomegalovirus UL84 by recognizing a non-classical NLS. In Mus musculus (Mouse), this protein is Importin subunit alpha-4 (Kpna3).